Here is a 74-residue protein sequence, read N- to C-terminus: Antimicrobial peptide AcrAP2 (74 aa).

Residues 1-22 form the signal peptide; that stretch reads MEIKYLLTVFLVLLIVSDHCQA. Lys-40 is subject to Lysine amide. A propeptide spanning residues 46–74 is cleaved from the precursor; sequence NLDGQIDRFRNFRKRDAELEELLSKLPIY.

Belongs to the non-disulfide-bridged peptide (NDBP) superfamily. Short antimicrobial peptide (group 4) family. In terms of tissue distribution, expressed by the venom gland.

The protein localises to the secreted. It is found in the target cell membrane. In terms of biological role, has antimicrobial activity against the Gram-positive bacteria S.aureus (MIC=8 uM) and the yeast C.albicans (MIC=16 uM). Causes hemolysis on horse erythrocytes (64 uM for 100% hemolysis). Minimum bactericidal concentrations have also been tested against S.aureus and is four-fold higher (MBC=32 uM). In Androctonus crassicauda (Arabian fat-tailed scorpion), this protein is Antimicrobial peptide AcrAP2.